We begin with the raw amino-acid sequence, 301 residues long: N-acetylmuramic acid 6-phosphate etherase (301 aa).

In terms of domain architecture, SIS spans 57 to 220; the sequence is TYEKMLFGGR…STSLMIKKGK (164 aa). The Proton donor role is filled by Glu85. Glu116 is a catalytic residue.

This sequence belongs to the GCKR-like family. MurNAc-6-P etherase subfamily. Homodimer.

It catalyses the reaction N-acetyl-D-muramate 6-phosphate + H2O = N-acetyl-D-glucosamine 6-phosphate + (R)-lactate. Its pathway is amino-sugar metabolism; N-acetylmuramate degradation. Specifically catalyzes the cleavage of the D-lactyl ether substituent of MurNAc 6-phosphate, producing GlcNAc 6-phosphate and D-lactate. The polypeptide is N-acetylmuramic acid 6-phosphate etherase (Clostridium botulinum (strain Eklund 17B / Type B)).